We begin with the raw amino-acid sequence, 1683 residues long: Phospholipase D1 (1683 aa).

Disordered stretches follow at residues 1–150 (MSNV…AYTQ), 173–198 (LKSS…QQVN), 259–289 (ILDI…SIPR), and 384–416 (VMEK…NITS). Ser2 carries the N-acetylserine modification. 2 positions are modified to phosphoserine: Ser8 and Ser30. 3 stretches are compositionally biased toward basic and acidic residues: residues 20-34 (SVTE…RPDE), 63-82 (NGKE…DRNL), and 90-112 (SLDH…ENMH). The segment covering 116-125 (NNLHSSNNNV) has biased composition (low complexity). The segment covering 141-150 (RRSSSVAYTQ) has biased composition (polar residues). At Ser145 the chain carries Phosphoserine. Positions 263 to 279 (TNSNHNHRGNNNNNTGE) are enriched in low complexity. The 197-residue stretch at 291–487 (SSIISISSNV…EFYELSPLGN (197 aa)) folds into the PX domain. Over residues 392–404 (KPSSAASAPHTSE) the composition is skewed to polar residues. Over residues 405–416 (NNNNDNGSNITS) the composition is skewed to low complexity. Residues 496–664 (QGKQGYLVIR…SSIIKMSTST (169 aa)) form the PH domain. PLD phosphodiesterase domains follow at residues 791–818 (YFWA…CYGR) and 1091–1118 (EQLY…NERS). Catalysis depends on residues His796, Lys798, Asp803, His1096, Lys1098, and Asp1103. Positions 1430-1465 (KDMRRHLSSSTESTRNGSNSLPLNEKSNEGESTNVD) are disordered. Over residues 1437 to 1451 (SSSTESTRNGSNSLP) the composition is skewed to polar residues. Position 1461 is a phosphoserine (Ser1461). Position 1462 is a phosphothreonine (Thr1462).

Belongs to the phospholipase D family. As to quaternary structure, interacts with SRF1.

The enzyme catalyses a 1,2-diacyl-sn-glycero-3-phosphocholine + H2O = a 1,2-diacyl-sn-glycero-3-phosphate + choline + H(+). Its activity is regulated as follows. Activity is dependent of phosphatidylinositol 4,5-bisphosphate and the regulator SRF1. Inhibited by magnesium. Its function is as follows. Required for meiosis and spore formation. Seems to be involved in the coordinate induction of late meiotic events. PLD activity is induced under sporulation conditions and seems to be necessary to complete the meiotic cycle, but not for vegetative cell growth. In Saccharomyces cerevisiae (strain ATCC 204508 / S288c) (Baker's yeast), this protein is Phospholipase D1 (SPO14).